We begin with the raw amino-acid sequence, 326 residues long: MAQRVQLTATVSENQLGQRLDQALAEMFPDYSRSRIKEWILDQRVLVNGKVCDKPKEKVLGGEQVAINAEIEEEARFEPQDIPLDIVYEDEDIIVINKPRDLVVHPGAGNPDGTVLNALLHYYPPIADVPRAGIVHRLDKDTTGLMVVAKTVPAQTRLVESLQRREITREYEAVAIGHMTAGGTVDEPISRHPTKRTHMAVHPMGKPAVTHYRIMEHFRVHTRLRLRLETGRTHQIRVHMAHITHPLVGDPVYGGRPRPPKGASEAFISTLRKFDRQALHATMLRLYHPISGIEMEWHAPIPQDMVELIEVMRADFEEHKDEVDWL.

Residues 18–91 (QRLDQALAEM…IPLDIVYEDE (74 aa)) form the S4 RNA-binding domain. Residue Asp139 is part of the active site.

Belongs to the pseudouridine synthase RluA family.

Its subcellular location is the cytoplasm. The catalysed reaction is uridine(1911/1915/1917) in 23S rRNA = pseudouridine(1911/1915/1917) in 23S rRNA. Its function is as follows. Responsible for synthesis of pseudouridine from uracil at positions 1911, 1915 and 1917 in 23S ribosomal RNA. The sequence is that of Ribosomal large subunit pseudouridine synthase D (rluD) from Shigella flexneri.